A 521-amino-acid chain; its full sequence is Leucine-rich repeat-containing protein 24 (521 aa).

A signal peptide spans 1–23 (MALRAPTLLLLLLGLLLLPLLPG). The LRRNT domain occupies 24 to 58 (LPPRATGCPAACRCYSATVECGALRLRVVPPGIPP). LRR repeat units lie at residues 59–80 (GTQT…SLAP), 83–104 (ALRH…AFRA), 107–128 (RLLE…AFVG), 131–152 (QLRV…TFLH), 155–176 (RLQE…ALAG), and 179–200 (SLAL…ALQP). An N-linked (GlcNAc...) asparagine glycan is attached at Asn91. One can recognise an LRRCT domain in the interval 212–267 (NPWRCDCALHWLGSWIKEGGRRLLSSRDKKITCAEPPRLALQSLLEVSGGSLICIP). The Ig-like C2-type domain occupies 268–371 (PSVNVEPPEF…ARVPFHLLVN (104 aa)). The cysteines at positions 289 and 353 are disulfide-linked. Residues 306 to 330 (QPRDGKPQAQAQLEGGAPGLGGHGT) form a disordered region. N-linked (GlcNAc...) asparagine glycosylation is found at Asn342 and Asn371. The disordered stretch occupies residues 374-395 (RQQSQQLPDPQAPATRPVGHEP). The chain crosses the membrane as a helical span at residues 414 to 434 (AITAAIALLALTALLLAAMIC).

The protein localises to the membrane. The chain is Leucine-rich repeat-containing protein 24 (Lrrc24) from Mus musculus (Mouse).